Reading from the N-terminus, the 221-residue chain is N-(5'-phosphoribosyl)anthranilate isomerase (221 aa).

This sequence belongs to the TrpF family.

It carries out the reaction N-(5-phospho-beta-D-ribosyl)anthranilate = 1-(2-carboxyphenylamino)-1-deoxy-D-ribulose 5-phosphate. Its pathway is amino-acid biosynthesis; L-tryptophan biosynthesis; L-tryptophan from chorismate: step 3/5. In Chlorobaculum parvum (strain DSM 263 / NCIMB 8327) (Chlorobium vibrioforme subsp. thiosulfatophilum), this protein is N-(5'-phosphoribosyl)anthranilate isomerase.